Reading from the N-terminus, the 244-residue chain is Probable 2-phosphosulfolactate phosphatase (244 aa).

Belongs to the ComB family. The cofactor is Mg(2+).

It carries out the reaction (2R)-O-phospho-3-sulfolactate + H2O = (2R)-3-sulfolactate + phosphate. In Thermosynechococcus vestitus (strain NIES-2133 / IAM M-273 / BP-1), this protein is Probable 2-phosphosulfolactate phosphatase.